The primary structure comprises 864 residues: DNA mismatch repair protein MutS (864 aa).

607–614 (GPNMGGKS) contacts ATP.

Belongs to the DNA mismatch repair MutS family.

This protein is involved in the repair of mismatches in DNA. It is possible that it carries out the mismatch recognition step. This protein has a weak ATPase activity. The polypeptide is DNA mismatch repair protein MutS (Neisseria meningitidis serogroup B (strain ATCC BAA-335 / MC58)).